Here is a 230-residue protein sequence, read N- to C-terminus: MKRGKKYIQLKEKVDRTKAYTLGEAVGLAKATSYSKFDGTLEISTKINYKSLQNVRGTISLPHGTGKTIKVLVFCKGDKQNEAREAGADFVGDMDLIEKVSGGWTDFDACVATPDMMKEVGKLGPVLGRKGLMPKPKAGTVTTDVSKAVKELKAGRIEYRPDKGGVVHLGVGKCSFSDDKLSDNINAVVAALMKDKPSDAKGDYLKSFSVAATMGIGVKVDVKELVNANI.

The protein belongs to the universal ribosomal protein uL1 family. As to quaternary structure, part of the 50S ribosomal subunit.

Its function is as follows. Binds directly to 23S rRNA. The L1 stalk is quite mobile in the ribosome, and is involved in E site tRNA release. Protein L1 is also a translational repressor protein, it controls the translation of the L11 operon by binding to its mRNA. The sequence is that of Large ribosomal subunit protein uL1 from Leptospira biflexa serovar Patoc (strain Patoc 1 / Ames).